Here is a 921-residue protein sequence, read N- to C-terminus: Leucine--tRNA ligase (921 aa).

The short motif at 80–90 (PYPSGKLHMGH) is the 'HIGH' region element. The 'KMSKS' region motif lies at 667–671 (KMSKS). K670 contributes to the ATP binding site.

It belongs to the class-I aminoacyl-tRNA synthetase family.

The protein resides in the cytoplasm. It carries out the reaction tRNA(Leu) + L-leucine + ATP = L-leucyl-tRNA(Leu) + AMP + diphosphate. This is Leucine--tRNA ligase from Psychrobacter arcticus (strain DSM 17307 / VKM B-2377 / 273-4).